A 346-amino-acid chain; its full sequence is uncharacterized protein (346 aa).

Transmembrane regions (helical) follow at residues 15–35 (YLRG…LLTV), 55–75 (VEAR…YLFI), 93–113 (ILVL…EALT), 139–159 (ILLL…PLIL), 182–202 (IFTF…YCYV), 229–249 (LGVA…LLLL), 269–289 (LTNY…FHLF), and 295–315 (LQSL…SAMW).

To E.coli YeiB, B.subtilis YxaH and B.subtilis YrkO.

It is found in the cell membrane. Its function is as follows. Involved in transport. This is an uncharacterized protein from Bacillus acidopullulyticus.